The chain runs to 423 residues: Adenylosuccinate synthetase (423 aa).

GTP is bound by residues 12–18 and 40–42; these read GDEGKGK and GHT. D13 (proton acceptor) is an active-site residue. Mg(2+) is bound by residues D13 and G40. IMP is bound by residues 13 to 16, 38 to 41, T129, R143, Q224, T239, and R303; these read DEGK and NAGH. The active-site Proton donor is H41. Residue 299-305 participates in substrate binding; it reads SVTGRQR. GTP contacts are provided by residues R305, 331–333, and 412–414; these read KGD and SVG.

It belongs to the adenylosuccinate synthetase family. In terms of assembly, homodimer. Requires Mg(2+) as cofactor.

Its subcellular location is the cytoplasm. The catalysed reaction is IMP + L-aspartate + GTP = N(6)-(1,2-dicarboxyethyl)-AMP + GDP + phosphate + 2 H(+). Its pathway is purine metabolism; AMP biosynthesis via de novo pathway; AMP from IMP: step 1/2. Its function is as follows. Plays an important role in the de novo pathway of purine nucleotide biosynthesis. Catalyzes the first committed step in the biosynthesis of AMP from IMP. In Flavobacterium johnsoniae (strain ATCC 17061 / DSM 2064 / JCM 8514 / BCRC 14874 / CCUG 350202 / NBRC 14942 / NCIMB 11054 / UW101) (Cytophaga johnsonae), this protein is Adenylosuccinate synthetase.